A 327-amino-acid chain; its full sequence is MAMTTEVKDELSRLVVKSVSARRAEVTSLLRFAGGLHIVAGRVVVEAEVDLGSIARRLRKDIFDLYGYSAVVHVLSASGIRKNTRYVLRVANDGEALARQTGLLDMRGRPVRGLPAQVVGGSIGDAEAAWRGAFLAHGSLTEPGRSSALEVSCPGPEAALALVGAARRLGVGAKAREVRGADRVVVRDGEAIGALLTRMGAQDTRLVWEERRMRREVRATANRLANFDDANLRRSARAAVAAAARVERALEILGDTVPDHLASAGKLRVEHRQASLEELGRLADPPMTKDAVAGRIRRLLSMADRKAKVEGIPDTESAVTPDLLEDA.

A DNA-binding region (H-T-H motif) is located at residues 275-308 (SLEELGRLADPPMTKDAVAGRIRRLLSMADRKAK).

Belongs to the WhiA family.

Its function is as follows. Involved in cell division and chromosome segregation. This chain is Probable cell division protein WhiA, found in Mycobacterium marinum (strain ATCC BAA-535 / M).